A 64-amino-acid polypeptide reads, in one-letter code: Disintegrin lebein-1-beta (64 aa).

Positions 1–64 (NSGNPCCDPV…SDCPRNPYKD (64 aa)) constitute a Disintegrin domain. 4 disulfide bridges follow: C6/C29, C20/C26, C25/C50, and C38/C57. A Cell attachment site motif is present at residues 42-44 (RGD).

It belongs to the disintegrin family. Dimeric disintegrin subfamily. As to quaternary structure, heterodimer with subunit alpha; disulfide-linked. Expressed by the venom gland.

It is found in the secreted. Strongly inhibits ADP-induced platelet aggregation on human platelet-rich plasma. Also avidly binds to the laminin-binding beta-1 integrins (alpha-3/beta-1, alpha-6/beta-1, and alpha-7/beta-1) in an RGD-independent manner. In Macrovipera lebetinus (Levantine viper), this protein is Disintegrin lebein-1-beta.